The sequence spans 1302 residues: 1-phosphatidylinositol 4,5-bisphosphate phosphodiesterase gamma-1 (1302 aa).

Ala2 is modified (N-acetylalanine). In terms of domain architecture, PH 1 spans 27–142; it reads RSLEVGTVMT…WIKGLTWLME (116 aa). The 36-residue stretch at 152-187 folds into the EF-hand domain; the sequence is QIERWLRKQFYSVDRNREDRISAKDLKNMLSQVNYR. Residues Asp165, Asn167, Glu169, Arg171, and Asp176 each coordinate Ca(2+). One can recognise a PI-PLC X-box domain in the interval 320-464; sequence DTMNNPLSHY…LRRKILIKHK (145 aa). Residues His335 and His380 contribute to the active site. The 35-residue stretch at 489-523 folds into the PH 2; first part domain; the sequence is SIKNGILYLEDPVNHEWYPHYFVLTSSKIYYSEET. Tyr506 carries the phosphotyrosine modification. The tract at residues 522–545 is disordered; the sequence is ETSSDQGNEDEEEPKEASSSTELH. 2 consecutive SH2 domains span residues 550–657 and 668–756; these read WFHG…SEPV and WYHA…RYPI. Tyr771 is subject to Phosphotyrosine; by SYK. Tyr775 carries the post-translational modification Phosphotyrosine. Tyr783 is subject to Phosphotyrosine; by ITK, SYK and TXK. An SH3 domain is found at 791 to 851; the sequence is TFKCAVKALF…PSNYVEEMIN (61 aa). In terms of domain architecture, PH 2; second part spans 895–931; sequence FVFSISMPSVAQWSLDVAADSQEELQDWVKKIREVAQ. Residues 953–1070 enclose the PI-PLC Y-box domain; it reads LSELVVYCRP…GYVLQPSTMR (118 aa). Tyr977 is subject to Phosphotyrosine. The region spanning 1071–1194 is the C2 domain; sequence DEAFDPFDKS…TGYRAVPLKN (124 aa). Ser1221, Ser1227, Ser1233, and Ser1248 each carry phosphoserine. Tyr1253 bears the Phosphotyrosine mark. Ser1263 carries the phosphoserine modification.

In terms of assembly, interacts (via SH2 domain) with FGFR1, FGFR2, FGFR3 and FGFR4 (phosphorylated). Interacts with RALGPS1. Interacts (via SH2 domains) with VIL1 (phosphorylated at C-terminus tyrosine phosphorylation sites). Interacts (via SH2 domain) with RET. Interacts with AGAP2 via its SH3 domain. Interacts with LAT (phosphorylated) upon TCR activation. Interacts (via SH3 domain) with the Pro-rich domain of TNK1. Associates with BLNK, VAV1, GRB2 and NCK1 in a B-cell antigen receptor-dependent fashion. Interacts with CBLB in activated T-cells; which inhibits phosphorylation. Interacts with SHB. Interacts (via SH3 domain) with the Arg/Gly-rich-flanked Pro-rich domains of KHDRBS1/SAM68. This interaction is selectively regulated by arginine methylation of KHDRBS1/SAM68. Interacts with INPP5D/SHIP1, THEMIS and CLNK. Interacts with FLT4 and KIT. Interacts with AXL. Interacts with SYK; activates PLCG1. Interacts with FLT1 (tyrosine-phosphorylated). Interacts (via SH2 domain) with PDGFRA and PDGFRB (tyrosine phosphorylated). Interacts with PIP5K1C. Interacts with NTRK1 and NTRK2 (phosphorylated upon ligand-binding). Interacts with TESPA1. Interacts with GRB2, LAT and THEMIS upon TCR activation in thymocytes; the association is weaker in the absence of TESPA1. Interacts (via C-terminal proline-rich domain (PRD)) with PLCG1 (via SH3 domain); this interaction leads to guanine nucleotide exchange from PlCG1 to DNM1 and enhances DNM1-dependent endocytosis. Ca(2+) is required as a cofactor. Post-translationally, tyrosine phosphorylated in response to signaling via activated FLT3, KIT and PDGFRA. Tyrosine phosphorylated by activated FGFR1, FGFR2, FGFR3 and FGFR4. Tyrosine phosphorylated by activated FLT1 and KDR. Tyrosine phosphorylated by activated PDGFRB. The receptor-mediated activation of PLCG1 involves its phosphorylation by tyrosine kinases in response to ligation of a variety of growth factor receptors and immune system receptors. For instance, SYK phosphorylates and activates PLCG1 in response to ligation of the B-cell receptor. Phosphorylated by ITK and TXK on Tyr-783 upon TCR activation in T-cells. May be dephosphorylated by PTPRJ. In terms of processing, ubiquitinated by CBLB in activated T-cells.

It localises to the cell projection. The protein resides in the lamellipodium. Its subcellular location is the ruffle. It carries out the reaction a 1,2-diacyl-sn-glycero-3-phospho-(1D-myo-inositol-4,5-bisphosphate) + H2O = 1D-myo-inositol 1,4,5-trisphosphate + a 1,2-diacyl-sn-glycerol + H(+). It catalyses the reaction a 1,2-diacyl-sn-glycero-3-phospho-(1D-myo-inositol) + H2O = 1D-myo-inositol 1-phosphate + a 1,2-diacyl-sn-glycerol + H(+). Activated by phosphorylation on tyrosine residues. In terms of biological role, mediates the production of the second messenger molecules diacylglycerol (DAG) and inositol 1,4,5-trisphosphate (IP3). Plays an important role in the regulation of intracellular signaling cascades. Becomes activated in response to ligand-mediated activation of receptor-type tyrosine kinases, such as PDGFRA, PDGFRB, EGFR, FGFR1, FGFR2, FGFR3 and FGFR4. Plays a role in actin reorganization and cell migration. Guanine nucleotide exchange factor that binds the GTPase DNM1 and catalyzes the dissociation of GDP, allowing a GTP molecule to bind in its place, therefore enhancing DNM1-dependent endocytosis. This Mus musculus (Mouse) protein is 1-phosphatidylinositol 4,5-bisphosphate phosphodiesterase gamma-1.